The following is a 538-amino-acid chain: MFS-type transporter tndD (538 aa).

The tract at residues 1–42 (MSLSGSDSHLAVSPTLAEDMNSSDTSAGLAETPPADEEKRSI) is disordered. 2 N-linked (GlcNAc...) asparagine glycosylation sites follow: N21 and N71. Helical transmembrane passes span 81–101 (VGIV…FAPG), 115–135 (LLAG…PLIL), 153–173 (ICFT…MLIA), 203–223 (GGVI…GPVA), 235–255 (WVFW…FLFL), 309–329 (PIVA…YLMF), 348–368 (GLTF…IGAV), 394–414 (LPPL…YGWS), 422–442 (IVPI…FMCI), 444–464 (SYLV…NTVV), and 485–505 (LGWG…IPWA).

Belongs to the major facilitator superfamily.

It localises to the membrane. In terms of biological role, MFS-type transporter; part of the gene cluster that mediates the biosynthesis of talaronoid C, a fusicoccane diterpenoid with an unprecedented tricyclic 5/8/6 ring system. The polypeptide is MFS-type transporter tndD (Aspergillus flavipes).